The primary structure comprises 455 residues: UDP-N-acetylmuramate--L-alanine ligase (455 aa).

Residue 109 to 115 (GTHGKTT) participates in ATP binding.

It belongs to the MurCDEF family.

It is found in the cytoplasm. It catalyses the reaction UDP-N-acetyl-alpha-D-muramate + L-alanine + ATP = UDP-N-acetyl-alpha-D-muramoyl-L-alanine + ADP + phosphate + H(+). Its pathway is cell wall biogenesis; peptidoglycan biosynthesis. Functionally, cell wall formation. The chain is UDP-N-acetylmuramate--L-alanine ligase from Caldicellulosiruptor saccharolyticus (strain ATCC 43494 / DSM 8903 / Tp8T 6331).